The chain runs to 167 residues: uncharacterized protein (167 aa).

It is found in the mitochondrion. This is an uncharacterized protein from Ascobolus immersus.